A 994-amino-acid chain; its full sequence is Cation-chloride cotransporter 2 (994 aa).

Residues 1–28 (MERGGFGGAGRHDEEAPAMRPAPQQRYR) are disordered. Over 1–139 (MERGGFGGAG…GHPKETETKL (139 aa)) the chain is Cytoplasmic. Residues 140–160 (DTMMGVFVPCLQNILGIIYYI) form a helical membrane-spanning segment. Residues 161–174 (RFTWIVGMGGVWQS) lie on the Extracellular side of the membrane. Residues 175–195 (LVLVAFCGSCTFLTTISLSAI) form a helical membrane-spanning segment. Over 196 to 221 (ATNGAMKGGGPYYLIGRALGPEVGVS) the chain is Cytoplasmic. A helical membrane pass occupies residues 222 to 242 (IGLCFFLGNAVAGAMYVLGAV). The Extracellular segment spans residues 243–287 (ETFLDAVPSAEFFQESVTVVTNTFVNGTAAGNATTISTPNLHDLQ). Residues N268 and N274 are each glycosylated (N-linked (GlcNAc...) asparagine). Residues 288–308 (VYGIIVTILLCFIVFGGVKII) form a helical membrane-spanning segment. At 309–311 (NKV) the chain is on the cytoplasmic side. Residues 312 to 332 (APAFLIPVLFSILCIYIGVFI) form a helical membrane-spanning segment. Over 333-372 (APRPNASKWITGLSITTLKDNWSSDYQRTNNAGVPDPNGS) the chain is Extracellular. 3 N-linked (GlcNAc...) asparagine glycosylation sites follow: N337, N353, and N370. Residues 373–393 (IYWDFNALLGLYFPAVTGIMA) form a helical membrane-spanning segment. The Cytoplasmic segment spans residues 394 to 412 (GSNRSASLKDTQRSIPIGT). A helical transmembrane segment spans residues 413–433 (LHATISTTMMYLLSVFLFGAL). The Extracellular segment spans residues 434–448 (STREGLLTDRLLCAA). A helical membrane pass occupies residues 449 to 469 (VAWPSPAVVYAGIILSTLGAA). Residues 470 to 505 (LQSLTGAPRLLAAIANDDILPVLNYFKAYEGSEPHV) are Cytoplasmic-facing. A helical transmembrane segment spans residues 506–526 (ATLFTSFICISCVIIGNLDVI). Residues 527–529 (TPT) lie on the Extracellular side of the membrane. A helical transmembrane segment spans residues 530 to 552 (ITMFFLLCYAGVNLSCFLLDLLD). Residues 553 to 558 (APSWRP) are Cytoplasmic-facing. Residues 559–579 (RWKLHHWSLSLIGALLCIVIM) form a helical membrane-spanning segment. At 580–585 (FMISWT) the chain is on the extracellular side. Residues 586–606 (FTVVSLALASLIYYYVSLKGK) form a helical membrane-spanning segment. The Cytoplasmic segment spans residues 607–994 (AGDWGDGFKS…YRRDVVTLFT (388 aa)).

The protein belongs to the SLC12A transporter family.

The protein resides in the membrane. In terms of biological role, probable cation/chloride cotransporter. The chain is Cation-chloride cotransporter 2 (CCC2) from Oryza sativa subsp. japonica (Rice).